Consider the following 524-residue polypeptide: Cytokinin dehydrogenase 4 (524 aa).

The signal sequence occupies residues 1-26; sequence MTNTLCLSLITLITLFISLTPTLIKS. 2 N-linked (GlcNAc...) asparagine glycosylation sites follow: Asn39 and Asn58. The FAD-binding PCMH-type domain occupies 60–249; that stretch reads TDENPGAVLC…TRARIALDHA (190 aa). 3 residues coordinate FAD: Ala104, Gly106, and Gly108. At His109 the chain carries Pros-8alpha-FAD histidine. The FAD site is built by Ser110 and Gln114. N-linked (GlcNAc...) asparagine glycosylation is present at Asn124. Residues Asp173, Ser178, Ser184, Ile188, and Ile239 each coordinate FAD. Asn411 is a glycosylation site (N-linked (GlcNAc...) asparagine). Residues Tyr482, Ser517, and Gln520 each coordinate FAD.

It belongs to the oxygen-dependent FAD-linked oxidoreductase family. It depends on FAD as a cofactor. Expressed in trichomes and in developing stomata of young growing leaves. Strong expression in stipules and in the root cap, but not detected in the root meristem.

Its subcellular location is the secreted. The protein resides in the extracellular space. It catalyses the reaction N(6)-dimethylallyladenine + A + H2O = 3-methyl-2-butenal + adenine + AH2. Catalyzes the oxidation of cytokinins, a family of N(6)-substituted adenine derivatives that are plant hormones, where the substituent is an isopentenyl group. This is Cytokinin dehydrogenase 4 (CKX4) from Arabidopsis thaliana (Mouse-ear cress).